Reading from the N-terminus, the 396-residue chain is NADH-quinone oxidoreductase subunit D (396 aa).

The protein belongs to the complex I 49 kDa subunit family. NDH-1 is composed of 14 different subunits. Subunits NuoB, C, D, E, F, and G constitute the peripheral sector of the complex.

The protein resides in the cell inner membrane. It catalyses the reaction a quinone + NADH + 5 H(+)(in) = a quinol + NAD(+) + 4 H(+)(out). Functionally, NDH-1 shuttles electrons from NADH, via FMN and iron-sulfur (Fe-S) centers, to quinones in the respiratory chain. The immediate electron acceptor for the enzyme in this species is believed to be ubiquinone. Couples the redox reaction to proton translocation (for every two electrons transferred, four hydrogen ions are translocated across the cytoplasmic membrane), and thus conserves the redox energy in a proton gradient. This chain is NADH-quinone oxidoreductase subunit D, found in Agrobacterium fabrum (strain C58 / ATCC 33970) (Agrobacterium tumefaciens (strain C58)).